Here is a 494-residue protein sequence, read N- to C-terminus: 3-octaprenyl-4-hydroxybenzoate carboxy-lyase (494 aa).

Mn(2+) is bound at residue asparagine 172. Prenylated FMN-binding positions include 175–177, 189–191, and 194–195; these read IYR, RWL, and RG. Glutamate 238 contacts Mn(2+). The active-site Proton donor is the aspartate 287.

This sequence belongs to the UbiD family. As to quaternary structure, homohexamer. Requires prenylated FMN as cofactor. It depends on Mn(2+) as a cofactor.

It is found in the cell membrane. The catalysed reaction is a 4-hydroxy-3-(all-trans-polyprenyl)benzoate + H(+) = a 2-(all-trans-polyprenyl)phenol + CO2. Its pathway is cofactor biosynthesis; ubiquinone biosynthesis. In terms of biological role, catalyzes the decarboxylation of 3-octaprenyl-4-hydroxy benzoate to 2-octaprenylphenol, an intermediate step in ubiquinone biosynthesis. In Shigella flexneri serotype 5b (strain 8401), this protein is 3-octaprenyl-4-hydroxybenzoate carboxy-lyase.